A 230-amino-acid chain; its full sequence is Probable nicotinate-nucleotide adenylyltransferase (230 aa).

The protein belongs to the NadD family.

It carries out the reaction nicotinate beta-D-ribonucleotide + ATP + H(+) = deamido-NAD(+) + diphosphate. It functions in the pathway cofactor biosynthesis; NAD(+) biosynthesis; deamido-NAD(+) from nicotinate D-ribonucleotide: step 1/1. Its function is as follows. Catalyzes the reversible adenylation of nicotinate mononucleotide (NaMN) to nicotinic acid adenine dinucleotide (NaAD). This chain is Probable nicotinate-nucleotide adenylyltransferase, found in Pseudomonas putida (strain ATCC 47054 / DSM 6125 / CFBP 8728 / NCIMB 11950 / KT2440).